Reading from the N-terminus, the 97-residue chain is C-C motif chemokine 7 (97 aa).

Residues 1–23 (MRISATLLCLLLIAAAFSIQVWA) form the signal peptide. At Gln24 the chain carries Pyrrolidone carboxylic acid. A glycan (N-linked (GlcNAc...) asparagine) is linked at Asn29. 2 disulfides stabilise this stretch: Cys33-Cys57 and Cys34-Cys73.

Belongs to the intercrine beta (chemokine CC) family. As to quaternary structure, monomer. Interacts with TNFAIP6 (via Link domain).

The protein resides in the secreted. Functionally, chemotactic factor that attracts monocytes and eosinophils, but not neutrophils. Augments monocyte anti-tumor activity. This chain is C-C motif chemokine 7 (Ccl7), found in Mus musculus (Mouse).